A 342-amino-acid chain; its full sequence is NADH-ubiquinone oxidoreductase chain 2 (342 aa).

A run of 9 helical transmembrane segments spans residues 25-45 (TPWL…IPML), 58-78 (IKYF…ILII), 94-114 (MMIM…FWLP), 146-166 (MSSF…MGGL), 174-194 (ILAY…TISE), 195-215 (NTWE…IFMF), 238-258 (FMMM…GFLP), 274-294 (LVLL…RISF), and 316-336 (VVAL…TSNF).

This sequence belongs to the complex I subunit 2 family.

The protein localises to the mitochondrion inner membrane. The enzyme catalyses a ubiquinone + NADH + 5 H(+)(in) = a ubiquinol + NAD(+) + 4 H(+)(out). Its function is as follows. Core subunit of the mitochondrial membrane respiratory chain NADH dehydrogenase (Complex I) that is believed to belong to the minimal assembly required for catalysis. Complex I functions in the transfer of electrons from NADH to the respiratory chain. The immediate electron acceptor for the enzyme is believed to be ubiquinone. This is NADH-ubiquinone oxidoreductase chain 2 (ND2) from Locusta migratoria (Migratory locust).